The chain runs to 175 residues: Homeobox expressed in ES cells 1 (175 aa).

Residues 1-44 (MSPNLQEGARLVEGKPSSTSFSIESILGLDQKKDDAPSMKPHRP) are disordered. The homeobox DNA-binding region spans 108 to 167 (GRRPRTAFTQNQVEVLENVFRVNCYPGIDIREDLARKLNLEEDRIQIWFQNRRAKLKRSH).

Belongs to the ANF homeobox family. As to quaternary structure, interacts with TLE1.

It localises to the nucleus. Its function is as follows. Required for the normal development of the forebrain, eyes and other anterior structures such as the olfactory placodes and pituitary gland. Possible transcriptional repressor. Binds to the palindromic PIII sequence, 5'-AGCTTGAGTCTAATTGAATTAACTGTAC-3'. The polypeptide is Homeobox expressed in ES cells 1 (HESX1) (Oryctolagus cuniculus (Rabbit)).